Here is a 159-residue protein sequence, read N- to C-terminus: Putative 4-hydroxy-4-methyl-2-oxoglutarate aldolase (159 aa).

Substrate contacts are provided by residues 75 to 78 (GDQL) and Arg-97. Asp-98 lines the a divalent metal cation pocket.

This sequence belongs to the class II aldolase/RraA-like family. As to quaternary structure, homotrimer. A divalent metal cation is required as a cofactor.

It catalyses the reaction 4-hydroxy-4-methyl-2-oxoglutarate = 2 pyruvate. The enzyme catalyses oxaloacetate + H(+) = pyruvate + CO2. Functionally, catalyzes the aldol cleavage of 4-hydroxy-4-methyl-2-oxoglutarate (HMG) into 2 molecules of pyruvate. Also contains a secondary oxaloacetate (OAA) decarboxylase activity due to the common pyruvate enolate transition state formed following C-C bond cleavage in the retro-aldol and decarboxylation reactions. This chain is Putative 4-hydroxy-4-methyl-2-oxoglutarate aldolase, found in Laribacter hongkongensis (strain HLHK9).